The following is a 100-amino-acid chain: Aspartyl/glutamyl-tRNA(Asn/Gln) amidotransferase subunit C (100 aa).

This sequence belongs to the GatC family. Heterotrimer of A, B and C subunits.

The catalysed reaction is L-glutamyl-tRNA(Gln) + L-glutamine + ATP + H2O = L-glutaminyl-tRNA(Gln) + L-glutamate + ADP + phosphate + H(+). The enzyme catalyses L-aspartyl-tRNA(Asn) + L-glutamine + ATP + H2O = L-asparaginyl-tRNA(Asn) + L-glutamate + ADP + phosphate + 2 H(+). Functionally, allows the formation of correctly charged Asn-tRNA(Asn) or Gln-tRNA(Gln) through the transamidation of misacylated Asp-tRNA(Asn) or Glu-tRNA(Gln) in organisms which lack either or both of asparaginyl-tRNA or glutaminyl-tRNA synthetases. The reaction takes place in the presence of glutamine and ATP through an activated phospho-Asp-tRNA(Asn) or phospho-Glu-tRNA(Gln). The sequence is that of Aspartyl/glutamyl-tRNA(Asn/Gln) amidotransferase subunit C from Petrotoga mobilis (strain DSM 10674 / SJ95).